Here is a 494-residue protein sequence, read N- to C-terminus: Cysteine--tRNA ligase (494 aa).

Cys-29 contacts Zn(2+). The 'HIGH' region motif lies at 31-41; sequence VTVYDHCHIGH. Residues Cys-209, His-234, and Glu-238 each contribute to the Zn(2+) site. The short motif at 266–270 is the 'KMSKS' region element; that stretch reads KMSKS. Position 269 (Lys-269) interacts with ATP.

This sequence belongs to the class-I aminoacyl-tRNA synthetase family. As to quaternary structure, monomer. Zn(2+) serves as cofactor.

It localises to the cytoplasm. It catalyses the reaction tRNA(Cys) + L-cysteine + ATP = L-cysteinyl-tRNA(Cys) + AMP + diphosphate. The polypeptide is Cysteine--tRNA ligase (Geotalea uraniireducens (strain Rf4) (Geobacter uraniireducens)).